Consider the following 1772-residue polypeptide: Gag-Pro-Pol polyprotein (1772 aa).

The N-myristoyl glycine; by host moiety is linked to residue G2. Residues 101–162 constitute a propeptide that is removed on maturation; sequence AAVAQTEEIL…TKKPKRFPVL (62 aa). Polar residues predominate over residues 113 to 126; it reads SSHTELTTKPSQNP. A disordered region spans residues 113 to 149; that stretch reads SSHTELTTKPSQNPDLDLISLDSDDEGAKGSSLKDKN. Over residues 138–149 the composition is skewed to basic and acidic residues; that stretch reads EGAKGSSLKDKN. A PPXY motif motif is present at residues 203 to 206; it reads PPPY. A PTAP/PSAP motif motif is present at residues 211-214; the sequence is PSAP. Positions 217 to 258 form a coiled coil; the sequence is MAVVNPKEELKEKIAQLEEQIKLEELHQALISKLQKLKTGNE. Residues 258–282 are disordered; that stretch reads ETVTSPETAGGFSRTPHWPGQHIPK. A CCHC-type zinc finger spans residues 548-565; sequence GCCFKCGRKGHFAKNCHE. The disordered stretch occupies residues 593-626; that stretch reads KSKTDSQGNPLPPHQGNRTEGPAPGPETSLWGGQ. The Peptidase A2 domain maps to 781-857; that stretch reads FTGLIDTGAD…LPVNLWGRDL (77 aa). The active-site Protease; shared with dimeric partner is the D786. Residues 868-914 enclose the G-patch domain; sequence PSDIVTAQMLAQGYSPGKGLGKNENGILHPIPNQGQFDKKGFGNFLT. The 189-residue stretch at 960–1148 folds into the Reverse transcriptase domain; that stretch reads LEAGHITESN…DPYTYLGFEL (189 aa). The Mg(2+) site is built by D1025, D1100, D1101, D1371, E1400, D1421, and D1485. Residues 1362–1493 form the RNase H type-1 domain; that stretch reads LNNALLVFTD…ADLATKTVAS (132 aa). An Integrase-type zinc finger spans residues 1497-1538; it reads TNLESAQNAHTLHHLNAQTLKLMFNIPREQARQIVRQCPICA. 4 residues coordinate Zn(2+): H1506, H1510, C1534, and C1537. One can recognise an Integrase catalytic domain in the interval 1551-1720; that stretch reads RGLLPNMIWQ…NPRKQFAMVK (170 aa). Mg(2+) is bound by residues D1562, D1619, and E1655. A DNA-binding region (integrase-type) is located at residues 1717–1766; sequence AMVKWKDPLDNTWPWPDPVIIWGRGSVCVYSQTHDAARWLPERLVKQIPN.

It belongs to the retroviral Pol polyprotein family. As to quaternary structure, homodimer. In terms of assembly, interacts with the G-patch peptide. Interacts with the reverse transcriptase/ribonuclease H. As to quaternary structure, homotrimer. Requires Mg(2+) as cofactor. Post-translationally, released by autocatalytic processing. The protease can undergo further autoprocessing to yield 2 shorter but enzymatically active forms of 12 kDa and 13 kDa. In terms of processing, myristoylated. Myristoylation of the matrix (MA) domain mediates the transport and binding of Gag polyproteins to the host plasma membrane and is required for the assembly of viral particles. Specific enzymatic cleavages in vivo yield mature proteins.

It is found in the virion. The enzyme catalyses DNA(n) + a 2'-deoxyribonucleoside 5'-triphosphate = DNA(n+1) + diphosphate. The catalysed reaction is Endonucleolytic cleavage to 5'-phosphomonoester.. It carries out the reaction dUTP + H2O = dUMP + diphosphate + H(+). Functionally, matrix protein. Nucleocapsid protein p14: Nucleocapsid protein. In terms of biological role, capsid protein. Its function is as follows. The aspartyl protease mediates proteolytic cleavages of Gag and Gag-Pol polyproteins during or shortly after the release of the virion from the plasma membrane. Cleavages take place as an ordered, step-wise cascade to yield mature proteins. This process is called maturation. Displays maximal activity during the budding process just prior to particle release from the cell. Functionally, enhances the activity of the reverse transcriptase. May be part of the mature RT. RT is a multifunctional enzyme that converts the viral dimeric RNA genome into dsDNA in the cytoplasm, shortly after virus entry into the cell. This enzyme displays a DNA polymerase activity that can copy either DNA or RNA templates, and a ribonuclease H (RNase H) activity that cleaves the RNA strand of RNA-DNA heteroduplexes in a partially processive 3' to 5' endonucleasic mode. Conversion of viral genomic RNA into dsDNA requires many steps. A tRNA binds to the primer-binding site (PBS) situated at the 5' end of the viral RNA. RT uses the 3' end of the tRNA primer to perfom a short round of RNA-dependent minus-strand DNA synthesis. The reading proceeds through the U5 region and ends after the repeated (R) region which is present at both ends of viral RNA. The portion of the RNA-DNA heteroduplex is digested by the RNase H, resulting in a ssDNA product attached to the tRNA primer. This ssDNA/tRNA hybridizes with the identical R region situated at the 3' end of viral RNA. This template exchange, known as minus-strand DNA strong stop transfer, can be either intra- or intermolecular. RT uses the 3' end of this newly synthesized short ssDNA to perfom the RNA-dependent minus-strand DNA synthesis of the whole template. RNase H digests the RNA template except for a polypurine tract (PPT) situated at the 5' end of the genome. It is not clear if both polymerase and RNase H activities are simultaneous. RNase H probably can proceed both in a polymerase-dependent (RNA cut into small fragments by the same RT performing DNA synthesis) and a polymerase-independent mode (cleavage of remaining RNA fragments by free RTs). Secondly, RT performs DNA-directed plus-strand DNA synthesis using the PPT that has not been removed by RNase H as primers. PPT and tRNA primers are then removed by RNase H. The 3' and 5' ssDNA PBS regions hybridize to form a circular dsDNA intermediate. Strand displacement synthesis by RT to the PBS and PPT ends produces a blunt ended, linear dsDNA copy of the viral genome that includes long terminal repeats (LTRs) at both ends. In terms of biological role, catalyzes viral DNA integration into the host chromosome, by performing a series of DNA cutting and joining reactions. In Macaca mulatta (Rhesus macaque), this protein is Gag-Pro-Pol polyprotein (pol).